Reading from the N-terminus, the 309-residue chain is HPr kinase/phosphorylase (309 aa).

Residues H138 and K159 contribute to the active site. Residue 153 to 160 (GDSGIGKS) coordinates ATP. S160 lines the Mg(2+) pocket. D177 acts as the Proton acceptor; for phosphorylation activity. Proton donor; for dephosphorylation activity in catalysis. Positions 201–210 (LEIRGVGIID) are important for the catalytic mechanism of both phosphorylation and dephosphorylation. E202 contributes to the Mg(2+) binding site. R243 is a catalytic residue. Positions 264 to 269 (PVKTGR) are important for the catalytic mechanism of dephosphorylation.

It belongs to the HPrK/P family. In terms of assembly, homohexamer. Mg(2+) serves as cofactor.

The enzyme catalyses [HPr protein]-L-serine + ATP = [HPr protein]-O-phospho-L-serine + ADP + H(+). The catalysed reaction is [HPr protein]-O-phospho-L-serine + phosphate + H(+) = [HPr protein]-L-serine + diphosphate. Its function is as follows. Catalyzes the ATP- as well as the pyrophosphate-dependent phosphorylation of a specific serine residue in HPr, a phosphocarrier protein of the phosphoenolpyruvate-dependent sugar phosphotransferase system (PTS). HprK/P also catalyzes the pyrophosphate-producing, inorganic phosphate-dependent dephosphorylation (phosphorolysis) of seryl-phosphorylated HPr (P-Ser-HPr). The two antagonistic activities of HprK/P are regulated by several intracellular metabolites, which change their concentration in response to the absence or presence of rapidly metabolisable carbon sources (glucose, fructose, etc.) in the growth medium. Therefore, by controlling the phosphorylation state of HPr, HPrK/P is a sensor enzyme that plays a major role in the regulation of carbon metabolism and sugar transport: it mediates carbon catabolite repression (CCR), and regulates PTS-catalyzed carbohydrate uptake and inducer exclusion. The chain is HPr kinase/phosphorylase from Streptococcus thermophilus (strain ATCC BAA-250 / LMG 18311).